The primary structure comprises 228 residues: Uracil-DNA glycosylase (228 aa).

D64 (proton acceptor) is an active-site residue.

It belongs to the uracil-DNA glycosylase (UDG) superfamily. UNG family.

The protein localises to the cytoplasm. The catalysed reaction is Hydrolyzes single-stranded DNA or mismatched double-stranded DNA and polynucleotides, releasing free uracil.. Functionally, excises uracil residues from the DNA which can arise as a result of misincorporation of dUMP residues by DNA polymerase or due to deamination of cytosine. This chain is Uracil-DNA glycosylase, found in Yersinia pestis bv. Antiqua (strain Antiqua).